We begin with the raw amino-acid sequence, 1073 residues long: Carbamoyl phosphate synthase large chain (1073 aa).

Residues 1 to 403 (MPKRTDIKSI…SLQKALRGLE (403 aa)) form a carboxyphosphate synthetic domain region. ATP contacts are provided by Arg129, Arg169, Gly175, Gly176, Glu208, Leu210, Glu215, Gly241, Val242, His243, Gln285, and Glu299. One can recognise an ATP-grasp 1 domain in the interval 133–328 (DKAMKDIGLE…IAKIAAKLAI (196 aa)). Residues Gln285, Glu299, and Asn301 each contribute to the Mg(2+) site. Residues Gln285, Glu299, and Asn301 each coordinate Mn(2+). The interval 404-553 (VGACGLDPKV…YSTYEEECEA (150 aa)) is oligomerization domain. The segment at 554–935 (NPSTRDKIMI…AFAKAQMGAS (382 aa)) is carbamoyl phosphate synthetic domain. The ATP-grasp 2 domain maps to 678–869 (QQMVQRLSLL…LAMIAARVMA (192 aa)). ATP is bound by residues Arg714, His753, Leu755, Glu760, Gly785, Val786, His787, Ser788, Gln828, and Glu840. Residues Gln828, Glu840, and Asn842 each contribute to the Mg(2+) site. Residues Gln828, Glu840, and Asn842 each contribute to the Mn(2+) site. The MGS-like domain occupies 936-1073 (EVLPTGGTAF…LQDLHAGLKA (138 aa)). Residues 936–1073 (EVLPTGGTAF…LQDLHAGLKA (138 aa)) form an allosteric domain region.

It belongs to the CarB family. Composed of two chains; the small (or glutamine) chain promotes the hydrolysis of glutamine to ammonia, which is used by the large (or ammonia) chain to synthesize carbamoyl phosphate. Tetramer of heterodimers (alpha,beta)4. The cofactor is Mg(2+). It depends on Mn(2+) as a cofactor.

It catalyses the reaction hydrogencarbonate + L-glutamine + 2 ATP + H2O = carbamoyl phosphate + L-glutamate + 2 ADP + phosphate + 2 H(+). The catalysed reaction is hydrogencarbonate + NH4(+) + 2 ATP = carbamoyl phosphate + 2 ADP + phosphate + 2 H(+). Its pathway is amino-acid biosynthesis; L-arginine biosynthesis; carbamoyl phosphate from bicarbonate: step 1/1. It participates in pyrimidine metabolism; UMP biosynthesis via de novo pathway; (S)-dihydroorotate from bicarbonate: step 1/3. Functionally, large subunit of the glutamine-dependent carbamoyl phosphate synthetase (CPSase). CPSase catalyzes the formation of carbamoyl phosphate from the ammonia moiety of glutamine, carbonate, and phosphate donated by ATP, constituting the first step of 2 biosynthetic pathways, one leading to arginine and/or urea and the other to pyrimidine nucleotides. The large subunit (synthetase) binds the substrates ammonia (free or transferred from glutamine from the small subunit), hydrogencarbonate and ATP and carries out an ATP-coupled ligase reaction, activating hydrogencarbonate by forming carboxy phosphate which reacts with ammonia to form carbamoyl phosphate. This is Carbamoyl phosphate synthase large chain from Pseudomonas putida (strain ATCC 47054 / DSM 6125 / CFBP 8728 / NCIMB 11950 / KT2440).